Here is a 153-residue protein sequence, read N- to C-terminus: Ribosomal RNA large subunit methyltransferase H (153 aa).

S-adenosyl-L-methionine-binding positions include leucine 63, glycine 102, and 121-126 (FGKITL).

The protein belongs to the RNA methyltransferase RlmH family. In terms of assembly, homodimer.

The protein localises to the cytoplasm. It catalyses the reaction pseudouridine(1915) in 23S rRNA + S-adenosyl-L-methionine = N(3)-methylpseudouridine(1915) in 23S rRNA + S-adenosyl-L-homocysteine + H(+). In terms of biological role, specifically methylates the pseudouridine at position 1915 (m3Psi1915) in 23S rRNA. This is Ribosomal RNA large subunit methyltransferase H from Sulfurovum sp. (strain NBC37-1).